The sequence spans 217 residues: Uracil-DNA glycosylase (217 aa).

Residue Asp-62 is the Proton acceptor of the active site.

Belongs to the uracil-DNA glycosylase (UDG) superfamily. UNG family.

It is found in the cytoplasm. It carries out the reaction Hydrolyzes single-stranded DNA or mismatched double-stranded DNA and polynucleotides, releasing free uracil.. Functionally, excises uracil residues from the DNA which can arise as a result of misincorporation of dUMP residues by DNA polymerase or due to deamination of cytosine. This Streptococcus pyogenes serotype M49 (strain NZ131) protein is Uracil-DNA glycosylase.